The sequence spans 124 residues: MSLPTDRKYTESHEWVQAEGDVFVVGITDNAQEQLGDLVFVGDVKVGATLKAGETAGVVESVKAASDIYAPVDGEIVAFNDELEANPSLINESAYTAWIFKIKPANAADLDKLLDAAGYQAVAG.

Residues V22–K103 enclose the Lipoyl-binding domain. At K63 the chain carries N6-lipoyllysine.

This sequence belongs to the GcvH family. In terms of assembly, the glycine cleavage system is composed of four proteins: P, T, L and H. It depends on (R)-lipoate as a cofactor.

In terms of biological role, the glycine cleavage system catalyzes the degradation of glycine. The H protein shuttles the methylamine group of glycine from the P protein to the T protein. This is Glycine cleavage system H protein from Bordetella pertussis (strain Tohama I / ATCC BAA-589 / NCTC 13251).